We begin with the raw amino-acid sequence, 95 residues long: Co-chaperonin GroES (95 aa).

Belongs to the GroES chaperonin family. In terms of assembly, heptamer of 7 subunits arranged in a ring. Interacts with the chaperonin GroEL.

Its subcellular location is the cytoplasm. Functionally, together with the chaperonin GroEL, plays an essential role in assisting protein folding. The GroEL-GroES system forms a nano-cage that allows encapsulation of the non-native substrate proteins and provides a physical environment optimized to promote and accelerate protein folding. GroES binds to the apical surface of the GroEL ring, thereby capping the opening of the GroEL channel. The protein is Co-chaperonin GroES of Maricaulis maris (strain MCS10) (Caulobacter maris).